The following is a 1005-amino-acid chain: Defense-associated sirtuin 2 (1005 aa).

Residues Met1–Glu295 are SIR2. Residues Tyr56 to Asp111 are inter-dimer interaction. Catalysis depends on residues Tyr134, Asp135, and His171. The interval Ser296–Asn548 is MID. The tract at residues Gln549–Ile1005 is CTD.

Homotetramer (dimer of dimers). Homodimer. The SIR2 domains are arranged in a central core, adopting a head-to-head arrangement, while the CTDs are positioned at the periphery of the complex. Tetramerization is necessary for the activation of NADase activity. The NADase enzymatic activity of this homotetrameric form is autoinhibited. The activated form of DSR2 (after binding to the phage tube protein) exists as tetramers and dimers, with the tetramers exhibiting more NADase activity. Each tetramer binds 4 NAD(+) molecules. In terms of assembly, (Microbial infection) Interacts (via C-terminus) with phage SPR tail tube monomer protein (via N-terminus) in a 4:4 DSR2-Tube assembly; this interaction induces a conformation change of the tube protein and activates the NADase activity of DSR2. As to quaternary structure, (Microbial infection) Interacts (via C-terminus) with phage SPbeta DSAD1 in a 4:2 ratio; this interaction prevents activation of the NADase defense activity of DSR2.

It carries out the reaction NAD(+) + H2O = ADP-D-ribose + nicotinamide + H(+). (Microbial infection) NADase activity is activated through the binding of SPR phage tail tube monomer protein. NADase activity is inhibited through the binding to the phage SPbeta DSR anti-defense 1 (DSAD1). Functionally, anti-phage defense protein that is activated through the binding to the phage tail tube protein monomer and which hydrolyzes NAD+ upon activation (NADase activity). The resulting depletion of NAD(+) leads to an abortive infection. The protein is Defense-associated sirtuin 2 of Bacillus subtilis.